A 173-amino-acid chain; its full sequence is Translation initiation factor IF-3 (173 aa).

This sequence belongs to the IF-3 family. Monomer.

The protein localises to the cytoplasm. IF-3 binds to the 30S ribosomal subunit and shifts the equilibrium between 70S ribosomes and their 50S and 30S subunits in favor of the free subunits, thus enhancing the availability of 30S subunits on which protein synthesis initiation begins. This Bacillus subtilis (strain 168) protein is Translation initiation factor IF-3.